The sequence spans 45 residues: DNA-directed RNA polymerase subunit Rpo12 (45 aa).

Positions 8, 23, and 26 each coordinate Zn(2+).

Belongs to the archaeal Rpo12/eukaryotic RPC10 RNA polymerase subunit family. As to quaternary structure, part of the RNA polymerase complex. The cofactor is Zn(2+).

The protein localises to the cytoplasm. The catalysed reaction is RNA(n) + a ribonucleoside 5'-triphosphate = RNA(n+1) + diphosphate. In terms of biological role, DNA-dependent RNA polymerase (RNAP) catalyzes the transcription of DNA into RNA using the four ribonucleoside triphosphates as substrates. The protein is DNA-directed RNA polymerase subunit Rpo12 of Methanocella arvoryzae (strain DSM 22066 / NBRC 105507 / MRE50).